A 1577-amino-acid polypeptide reads, in one-letter code: High molecular weight form of myosin-1 (1577 aa).

A Myosin motor domain is found at 75–751 (KSVDDLVQMD…EQRGLELQRN (677 aa)). Lys119 carries the post-translational modification N6,N6,N6-trimethyllysine. 168–175 (GESGAGKT) serves as a coordination point for ATP. Actin-binding regions lie at residues 628 to 650 (LDSLMTALNATEPHYIRCIKPNS) and 730 to 744 (QVGKTRVLYRAPEQR). Positions 755–782 (ERVTIQIQAGVRRMFARRLYKRMRAIKP) constitute an IQ domain. Residues 1261–1401 (WTKSPIPTSL…PNVEQILAAK (141 aa)) enclose the MyTH4 domain. 2 disordered regions span residues 1442–1466 (SRPAQARAQPGQQAQPAGAARQQAA) and 1483–1516 (QQQQQQQGYDQQQQAYGGGADYGQQQQQQDLPAE). Low complexity-rich tracts occupy residues 1444–1466 (PAQARAQPGQQAQPAGAARQQAA) and 1483–1497 (QQQQQQQGYDQQQQA). The SH3 domain occupies 1519–1577 (EEYKQVEVVYDYDGGGDAQRLVLVKGAIITVIKEYEGWAYGSTDDGQVGLYPINYTRPI).

The protein belongs to the TRAFAC class myosin-kinesin ATPase superfamily. Myosin family. Myosin I heavy chain is single-headed.

The protein is High molecular weight form of myosin-1 of Acanthamoeba castellanii (Amoeba).